A 549-amino-acid polypeptide reads, in one-letter code: CTP synthase (549 aa).

The segment at 1–272 (MPPKSTTTKH…DAYVVRKLDL (272 aa)) is amidoligase domain. Ser19 serves as a coordination point for CTP. A UTP-binding site is contributed by Ser19. ATP is bound by residues 20 to 25 (SLGKGL) and Asp77. Mg(2+)-binding residues include Asp77 and Glu146. CTP-binding positions include 153-155 (DIE), 193-198 (KTKPTQ), and Lys229. UTP is bound by residues 193–198 (KTKPTQ) and Lys229. The Glutamine amidotransferase type-1 domain occupies 297 to 548 (NLALVGKYID…VKAAVERKTG (252 aa)). Residue Gly360 coordinates L-glutamine. Cys387 acts as the Nucleophile; for glutamine hydrolysis in catalysis. Residues 388–391 (LGLQ), Glu411, and Arg473 each bind L-glutamine. Residues His521 and Glu523 contribute to the active site.

It belongs to the CTP synthase family. As to quaternary structure, homotetramer.

It catalyses the reaction UTP + L-glutamine + ATP + H2O = CTP + L-glutamate + ADP + phosphate + 2 H(+). It carries out the reaction L-glutamine + H2O = L-glutamate + NH4(+). The enzyme catalyses UTP + NH4(+) + ATP = CTP + ADP + phosphate + 2 H(+). Its pathway is pyrimidine metabolism; CTP biosynthesis via de novo pathway; CTP from UDP: step 2/2. Allosterically activated by GTP, when glutamine is the substrate; GTP has no effect on the reaction when ammonia is the substrate. The allosteric effector GTP functions by stabilizing the protein conformation that binds the tetrahedral intermediate(s) formed during glutamine hydrolysis. Inhibited by the product CTP, via allosteric rather than competitive inhibition. Functionally, catalyzes the ATP-dependent amination of UTP to CTP with either L-glutamine or ammonia as the source of nitrogen. Regulates intracellular CTP levels through interactions with the four ribonucleotide triphosphates. The chain is CTP synthase from Streptomyces avermitilis (strain ATCC 31267 / DSM 46492 / JCM 5070 / NBRC 14893 / NCIMB 12804 / NRRL 8165 / MA-4680).